Reading from the N-terminus, the 367-residue chain is Alanine racemase (367 aa).

Lys-40 acts as the Proton acceptor; specific for D-alanine in catalysis. Residue Lys-40 is modified to N6-(pyridoxal phosphate)lysine. Arg-136 contacts substrate. The Proton acceptor; specific for L-alanine role is filled by Tyr-263. Met-310 is a binding site for substrate.

It belongs to the alanine racemase family. Pyridoxal 5'-phosphate is required as a cofactor.

The catalysed reaction is L-alanine = D-alanine. It participates in amino-acid biosynthesis; D-alanine biosynthesis; D-alanine from L-alanine: step 1/1. In terms of biological role, catalyzes the interconversion of L-alanine and D-alanine. May also act on other amino acids. The protein is Alanine racemase (alr) of Lactococcus lactis subsp. cremoris (strain SK11).